Here is a 458-residue protein sequence, read N- to C-terminus: Argininosuccinate lyase (458 aa).

It belongs to the lyase 1 family. Argininosuccinate lyase subfamily.

Its subcellular location is the cytoplasm. The catalysed reaction is 2-(N(omega)-L-arginino)succinate = fumarate + L-arginine. Its pathway is amino-acid biosynthesis; L-arginine biosynthesis; L-arginine from L-ornithine and carbamoyl phosphate: step 3/3. The sequence is that of Argininosuccinate lyase from Citrifermentans bemidjiense (strain ATCC BAA-1014 / DSM 16622 / JCM 12645 / Bem) (Geobacter bemidjiensis).